Here is a 511-residue protein sequence, read N- to C-terminus: Cobyric acid synthase (511 aa).

Residues 251–443 (LLDIAIICLP…IHGIFDNDVF (193 aa)) enclose the GATase cobBQ-type domain. Catalysis depends on C332, which acts as the Nucleophile. H435 is an active-site residue.

It belongs to the CobB/CobQ family. CobQ subfamily.

Its pathway is cofactor biosynthesis; adenosylcobalamin biosynthesis. Its function is as follows. Catalyzes amidations at positions B, D, E, and G on adenosylcobyrinic A,C-diamide. NH(2) groups are provided by glutamine, and one molecule of ATP is hydrogenolyzed for each amidation. In Listeria monocytogenes serotype 4b (strain CLIP80459), this protein is Cobyric acid synthase.